The chain runs to 555 residues: Protein FAM234A (555 aa).

The span at 1–22 shows a compositional bias: basic and acidic residues; that stretch reads MMDNKDLEAEIHPLKNEDKKSQ. Residues 1–40 form a disordered region; it reads MMDNKDLEAEIHPLKNEDKKSQENPGNLPRNEDNLKSKPV. The Cytoplasmic segment spans residues 1–49; it reads MMDNKDLEAEIHPLKNEDKKSQENPGNLPRNEDNLKSKPVPSRLSRCRT. A Phosphoserine modification is found at S21. Residues 50–70 form a helical; Signal-anchor for type II membrane protein membrane-spanning segment; sequence VAFFLSLFTCLFVVFVLSFII. The Extracellular portion of the chain corresponds to 71–555; the sequence is PCPDRPSSQG…FSRLRYRSEM (485 aa). Residues N116, N120, N317, N392, and N476 are each glycosylated (N-linked (GlcNAc...) asparagine).

This sequence belongs to the FAM234 family.

The protein resides in the membrane. This is Protein FAM234A from Mus musculus (Mouse).